A 202-amino-acid chain; its full sequence is ATP-dependent Clp protease proteolytic subunit (202 aa).

The active-site Nucleophile is Ser106. His131 is a catalytic residue.

This sequence belongs to the peptidase S14 family. In terms of assembly, fourteen ClpP subunits assemble into 2 heptameric rings which stack back to back to give a disk-like structure with a central cavity, resembling the structure of eukaryotic proteasomes.

It is found in the cytoplasm. The enzyme catalyses Hydrolysis of proteins to small peptides in the presence of ATP and magnesium. alpha-casein is the usual test substrate. In the absence of ATP, only oligopeptides shorter than five residues are hydrolyzed (such as succinyl-Leu-Tyr-|-NHMec, and Leu-Tyr-Leu-|-Tyr-Trp, in which cleavage of the -Tyr-|-Leu- and -Tyr-|-Trp bonds also occurs).. Cleaves peptides in various proteins in a process that requires ATP hydrolysis. Has a chymotrypsin-like activity. Plays a major role in the degradation of misfolded proteins. In Shewanella sp. (strain ANA-3), this protein is ATP-dependent Clp protease proteolytic subunit.